We begin with the raw amino-acid sequence, 283 residues long: Pantothenate synthetase (283 aa).

Residue 30-37 coordinates ATP; it reads MGYFHEGH. Catalysis depends on His-37, which acts as the Proton donor. Gln-61 serves as a coordination point for (R)-pantoate. Beta-alanine is bound at residue Gln-61. 147–150 is an ATP binding site; sequence GEKD. Gln-153 lines the (R)-pantoate pocket. ATP-binding positions include Val-176 and 184–187; that span reads MSSR.

It belongs to the pantothenate synthetase family. In terms of assembly, homodimer.

The protein localises to the cytoplasm. The catalysed reaction is (R)-pantoate + beta-alanine + ATP = (R)-pantothenate + AMP + diphosphate + H(+). Its pathway is cofactor biosynthesis; (R)-pantothenate biosynthesis; (R)-pantothenate from (R)-pantoate and beta-alanine: step 1/1. In terms of biological role, catalyzes the condensation of pantoate with beta-alanine in an ATP-dependent reaction via a pantoyl-adenylate intermediate. This is Pantothenate synthetase from Syntrophobacter fumaroxidans (strain DSM 10017 / MPOB).